Here is a 491-residue protein sequence, read N- to C-terminus: Proline-rich protein PRCC (491 aa).

The segment at 1 to 100 (MSLVAYASSD…PPPPGVSPAE (100 aa)) is mediates interaction with MAD2L2. Disordered stretches follow at residues 1-244 (MSLV…SPSA), 260-313 (ITQE…PAFQ), and 432-454 (EEKT…QRRK). Positions 10–26 (DESEPDEAEPEPEEEEA) are enriched in acidic residues. Over residues 40-49 (ASLPAPKGPA) the composition is skewed to low complexity. Pro residues predominate over residues 50 to 96 (LLPPPPQMLAPAFPPPLLLPPPTGDPRLQPPPPLPFGLGGFPPPPGV). Residues S97, S114, S157, S159, S212, and S218 each carry the phosphoserine modification. The segment covering 111-120 (GLPSPRGPGL) has biased composition (low complexity). The span at 230 to 244 (APVVGTTTTTPSPSA) shows a compositional bias: low complexity. Position 239 is a phosphothreonine (T239). 2 positions are modified to phosphoserine: S241 and S267. Residues 262-272 (QEEDDSDEEVA) are compositionally biased toward acidic residues. Residues 287–307 (GVEPYPYPIPTVPEELPPGTE) are compositionally biased toward pro residues.

Interacts with MAD2L2; the interaction is direct. In terms of tissue distribution, ubiquitous in fetal and adult tissues.

Its subcellular location is the nucleus. Its function is as follows. May regulate cell cycle progression through interaction with MAD2L2. In Homo sapiens (Human), this protein is Proline-rich protein PRCC (PRCC).